Consider the following 147-residue polypeptide: Transmembrane protein 210 (147 aa).

The N-terminal stretch at 1–31 (MAPGPWPVSCLRGGPLGLTYLSLLLIPAAAG) is a signal peptide. At 32–47 (TYCECSLGLSREALIA) the chain is on the extracellular side. Residues 48–68 (LLVVLAGISASCFCALVIVAI) form a helical membrane-spanning segment. Residues 69-147 (GVLRAKGETC…PPPPPPLPPE (79 aa)) are Cytoplasmic-facing. A disordered region spans residues 128–147 (AIPMEASSEEPPPPPPLPPE). The segment covering 137–147 (EPPPPPPLPPE) has biased composition (pro residues).

The protein resides in the membrane. It is found in the cytoplasmic vesicle. The protein localises to the secretory vesicle. Its subcellular location is the acrosome. This Homo sapiens (Human) protein is Transmembrane protein 210 (TMEM210).